A 210-amino-acid polypeptide reads, in one-letter code: Thymidylate kinase (210 aa).

Residue 10 to 17 participates in ATP binding; the sequence is GLEGAGKT.

Belongs to the thymidylate kinase family.

The enzyme catalyses dTMP + ATP = dTDP + ADP. Functionally, phosphorylation of dTMP to form dTDP in both de novo and salvage pathways of dTTP synthesis. In Actinobacillus succinogenes (strain ATCC 55618 / DSM 22257 / CCUG 43843 / 130Z), this protein is Thymidylate kinase.